Here is a 383-residue protein sequence, read N- to C-terminus: Arginine biosynthesis bifunctional protein ArgJ (383 aa).

The substrate site is built by Thr-146, Lys-168, Thr-179, Glu-259, Asn-378, and Thr-383. The Nucleophile role is filled by Thr-179.

It belongs to the ArgJ family. In terms of assembly, heterotetramer of two alpha and two beta chains.

It is found in the cytoplasm. The enzyme catalyses N(2)-acetyl-L-ornithine + L-glutamate = N-acetyl-L-glutamate + L-ornithine. It carries out the reaction L-glutamate + acetyl-CoA = N-acetyl-L-glutamate + CoA + H(+). Its pathway is amino-acid biosynthesis; L-arginine biosynthesis; L-ornithine and N-acetyl-L-glutamate from L-glutamate and N(2)-acetyl-L-ornithine (cyclic): step 1/1. It functions in the pathway amino-acid biosynthesis; L-arginine biosynthesis; N(2)-acetyl-L-ornithine from L-glutamate: step 1/4. Functionally, catalyzes two activities which are involved in the cyclic version of arginine biosynthesis: the synthesis of N-acetylglutamate from glutamate and acetyl-CoA as the acetyl donor, and of ornithine by transacetylation between N(2)-acetylornithine and glutamate. In Thermobifida fusca (strain YX), this protein is Arginine biosynthesis bifunctional protein ArgJ.